The primary structure comprises 254 residues: Ubiquinone/menaquinone biosynthesis C-methyltransferase UbiE (254 aa).

Residues Thr77, Asp98, 126-127 (NA), and Ser143 contribute to the S-adenosyl-L-methionine site.

The protein belongs to the class I-like SAM-binding methyltransferase superfamily. MenG/UbiE family.

The catalysed reaction is a 2-demethylmenaquinol + S-adenosyl-L-methionine = a menaquinol + S-adenosyl-L-homocysteine + H(+). It carries out the reaction a 2-methoxy-6-(all-trans-polyprenyl)benzene-1,4-diol + S-adenosyl-L-methionine = a 5-methoxy-2-methyl-3-(all-trans-polyprenyl)benzene-1,4-diol + S-adenosyl-L-homocysteine + H(+). The protein operates within quinol/quinone metabolism; menaquinone biosynthesis; menaquinol from 1,4-dihydroxy-2-naphthoate: step 2/2. Its pathway is cofactor biosynthesis; ubiquinone biosynthesis. In terms of biological role, methyltransferase required for the conversion of demethylmenaquinol (DMKH2) to menaquinol (MKH2) and the conversion of 2-polyprenyl-6-methoxy-1,4-benzoquinol (DDMQH2) to 2-polyprenyl-3-methyl-6-methoxy-1,4-benzoquinol (DMQH2). In Blochmanniella floridana, this protein is Ubiquinone/menaquinone biosynthesis C-methyltransferase UbiE.